The following is a 329-amino-acid chain: Solute carrier family 35 member B1 (329 aa).

A run of 8 helical transmembrane segments spans residues 21–41 (AVCF…QETI), 60–80 (TLVF…IQFF), 91–111 (WLYG…NSAL), 142–162 (YPMA…LFLY), 175–195 (VFGF…LTGV), 220–240 (TLVL…LAFT), 250–270 (ILLF…TVVY), and 292–312 (VLLF…LVFL). Positions 325-329 (KKTTH) match the Di-lysine motif motif.

This sequence belongs to the nucleotide-sugar transporter family. SLC35B subfamily.

The protein localises to the endoplasmic reticulum membrane. Its function is as follows. Probable sugar transporter. The sequence is that of Solute carrier family 35 member B1 (slc35b1) from Danio rerio (Zebrafish).